The chain runs to 1581 residues: Maestro heat-like repeat-containing protein family member 2B (1581 aa).

HEAT repeat units follow at residues 123–160 (FMMM…SIYK), 305–342 (ANPV…AEEP), 401–441 (MSNR…LVIG), 464–501 (DYLF…KLPS), 526–543 (AIGL…KLAE), 544–580 (MWKT…SLWK), 658–695 (ENHL…LTKT), 773–815 (TYKE…LKPA), 960–997 (CQEV…KFIP), 1017–1055 (PLCT…HMPV), 1112–1150 (KLMR…TGAH), 1153–1191 (HLYP…LGER), 1254–1291 (GVIL…EPIL), 1295–1332 (GNLR…GAPH), 1359–1379 (CESL…DINF), and 1380–1416 (YFKE…LTGR).

In terms of assembly, found in a complex at least composed of MROH2B isoform 2, PRKACA isoform 2 and TCP11. Interacts with PRKACA isoform 2. Interacts with TCP11. Post-translationally, constitutively phosphorylated on serine and threonine residues in acrosomal region of the sperm head, midpiece and flagellar regions of noncapacitated spermatozoa. Phosphorylation on tyrosine residues increases upon sperm capacitation within the acrosomal and tail regions in a protein kinase A (PKA)-dependent signaling pathway. In terms of tissue distribution, expressed strongly in round spermatids and fully mature spermatozoa. Expressed weakly in pachytene spermatocytes (at protein level). Isoform 2 is specifically expressed in the testis. Isoform 2 is expressed in pachytene spermatocytes and round spermatids. Isoform 3 is weakly expressed in testis.

The protein resides in the cytoplasm. It localises to the cytoplasmic vesicle. Its subcellular location is the secretory vesicle. The protein localises to the acrosome. It is found in the cell projection. The protein resides in the cilium. It localises to the flagellum. May play a role in the process of sperm capacitation. In Mus musculus (Mouse), this protein is Maestro heat-like repeat-containing protein family member 2B.